We begin with the raw amino-acid sequence, 540 residues long: Collagen alpha-1(XXIII) chain (540 aa).

Positions 1-26 (MGPGERAGGGGDAGKGNAAGGGGGGR) are enriched in gly residues. The interval 1–28 (MGPGERAGGGGDAGKGNAAGGGGGGRSA) is disordered. The Cytoplasmic segment spans residues 1–34 (MGPGERAGGGGDAGKGNAAGGGGGGRSATTAGSR). Residues 35 to 56 (AVSALCLLLSVGSAAACLLLGV) form a helical; Signal-anchor for type II membrane protein membrane-spanning segment. The Extracellular portion of the chain corresponds to 57 to 540 (QAAALQGRVA…GLPVPGCWHK (484 aa)). 2 disordered regions span residues 109–304 (AREA…GEQG) and 316–540 (LDAL…CWHK). 5 Collagen-like domains span residues 124-243 (GRRG…PGKK), 251-305 (QPGP…EQGD), 321-380 (GPPG…MGLS), 412-460 (GPPG…GPPG), and 463-522 (GLPG…PGLD). Low complexity-rich tracts occupy residues 140-156 (QSGRDGYPGPLGLDGKP) and 168-183 (PGDFGPRGDQGQDGAA). Residues 185–195 (PPGPPGPPGAR) show a composition bias toward pro residues. Over residues 322 to 334 (PPGPQGPPGPPGI) the composition is skewed to pro residues. Residues 350-362 (DGEKGPKGQKGDP) show a composition bias toward basic and acidic residues. Positions 411-422 (PGPPGPPGPPGP) are enriched in pro residues. 2 stretches are compositionally biased toward basic and acidic residues: residues 435-444 (DGAKGEKGAS) and 486-503 (RGEKGDRSERGEKGERGV).

In terms of assembly, homotrimer. In terms of processing, undergoes proteolytic cleavage by furin protease to yield a 60 kDa soluble form that forms a homotrimer and exhibits a low affinity interaction with heparin.

The protein localises to the cell membrane. The protein is Collagen alpha-1(XXIII) chain (COL23A1) of Homo sapiens (Human).